We begin with the raw amino-acid sequence, 801 residues long: Mitochondrial intermediate peptidase (801 aa).

The N-terminal 41 residues, 1 to 41 (MKDQLLVPLRRRPWTCQKCLQRLQLPRHQTRRSFETAASPF), are a transit peptide targeting the mitochondrion. Residue histidine 564 coordinates Zn(2+). Residue glutamate 565 is part of the active site. Histidine 568 and histidine 571 together coordinate Zn(2+).

The protein belongs to the peptidase M3 family. Requires Zn(2+) as cofactor.

The protein resides in the mitochondrion matrix. It catalyses the reaction Release of an N-terminal octapeptide as second stage of processing of some proteins imported into the mitochondrion.. Its function is as follows. Cleaves proteins, imported into the mitochondrion, to their mature size. While most mitochondrial precursor proteins are processed to the mature form in one step by mitochondrial processing peptidase (MPP), the sequential cleavage by MIP of an octapeptide after initial processing by MPP is a required step for a subgroup of nuclear-encoded precursor proteins destined for the matrix or the inner membrane. This chain is Mitochondrial intermediate peptidase (oct1), found in Aspergillus fumigatus (strain ATCC MYA-4609 / CBS 101355 / FGSC A1100 / Af293) (Neosartorya fumigata).